The primary structure comprises 282 residues: 2-dehydro-3-deoxyphosphooctonate aldolase (282 aa).

Belongs to the KdsA family.

It localises to the cytoplasm. It carries out the reaction D-arabinose 5-phosphate + phosphoenolpyruvate + H2O = 3-deoxy-alpha-D-manno-2-octulosonate-8-phosphate + phosphate. The protein operates within carbohydrate biosynthesis; 3-deoxy-D-manno-octulosonate biosynthesis; 3-deoxy-D-manno-octulosonate from D-ribulose 5-phosphate: step 2/3. It functions in the pathway bacterial outer membrane biogenesis; lipopolysaccharide biosynthesis. The sequence is that of 2-dehydro-3-deoxyphosphooctonate aldolase from Chromobacterium violaceum (strain ATCC 12472 / DSM 30191 / JCM 1249 / CCUG 213 / NBRC 12614 / NCIMB 9131 / NCTC 9757 / MK).